We begin with the raw amino-acid sequence, 426 residues long: Glutamate-1-semialdehyde 2,1-aminomutase (426 aa).

At Lys265 the chain carries N6-(pyridoxal phosphate)lysine.

Belongs to the class-III pyridoxal-phosphate-dependent aminotransferase family. HemL subfamily. Homodimer. Requires pyridoxal 5'-phosphate as cofactor.

Its subcellular location is the cytoplasm. It catalyses the reaction (S)-4-amino-5-oxopentanoate = 5-aminolevulinate. The protein operates within porphyrin-containing compound metabolism; protoporphyrin-IX biosynthesis; 5-aminolevulinate from L-glutamyl-tRNA(Glu): step 2/2. This chain is Glutamate-1-semialdehyde 2,1-aminomutase, found in Cellvibrio japonicus (strain Ueda107) (Pseudomonas fluorescens subsp. cellulosa).